We begin with the raw amino-acid sequence, 409 residues long: PPE family protein PPE32 (409 aa).

It belongs to the mycobacterial PPE family. Interacts with host Toll-like receptor 2 (TLR2).

Its subcellular location is the secreted. The protein localises to the cell wall. It localises to the cell surface. Virulence factor that modulates the production of host cytokines. The chain is PPE family protein PPE32 from Mycobacterium tuberculosis (strain CDC 1551 / Oshkosh).